Consider the following 122-residue polypeptide: Urocortin (122 aa).

Positions 1–25 (MRQRGRATLLVALLLLVQLRPESSQ) are cleaved as a signal peptide. Positions 26–80 (WSPAAAAANVVQDPNLRWNPGVRNQGGGVRALLLLLAERFPRRAGSEPAGERQRR) are excised as a propeptide. At valine 120 the chain carries Valine amide.

This sequence belongs to the sauvagine/corticotropin-releasing factor/urotensin I family. As to quaternary structure, interacts with CRHR1 and CRHR2 (via their N-terminal extracellular domain).

It is found in the secreted. Its function is as follows. Acts in vitro to stimulate the secretion of adrenocorticotropic hormone (ACTH). Binds with high affinity to CRF receptor types 1, 2-alpha, and 2-beta. Plays a role in the establishment of normal hearing thresholds. Reduces food intake and regulates ghrelin levels in gastric body and plasma. The sequence is that of Urocortin (Ucn) from Rattus norvegicus (Rat).